A 119-amino-acid chain; its full sequence is MVKLNFSRELRLLTPIQFKNVFEQPFRASTPEITILARKNNLEHPRLGLTVAKKHLKRAHERNRIKRLVRESFRLSQHRLPAYDFVFVAKNGIGKLDNSAFAQILEKLWQRHIRLAQKS.

It belongs to the RnpA family. In terms of assembly, consists of a catalytic RNA component (M1 or rnpB) and a protein subunit.

It carries out the reaction Endonucleolytic cleavage of RNA, removing 5'-extranucleotides from tRNA precursor.. Its function is as follows. RNaseP catalyzes the removal of the 5'-leader sequence from pre-tRNA to produce the mature 5'-terminus. It can also cleave other RNA substrates such as 4.5S RNA. The protein component plays an auxiliary but essential role in vivo by binding to the 5'-leader sequence and broadening the substrate specificity of the ribozyme. The chain is Ribonuclease P protein component from Haemophilus influenzae (strain 86-028NP).